We begin with the raw amino-acid sequence, 22 residues long: Mu-conotoxin GIIIB (22 aa).

Intrachain disulfides connect Cys-3-Cys-15, Cys-4-Cys-20, and Cys-10-Cys-21. 4-hydroxyproline; partial occurs at positions 6 and 7. Pro-17 bears the 4-hydroxyproline mark. Position 22 is an alanine amide (Ala-22).

The protein belongs to the conotoxin M superfamily. As to expression, expressed by the venom duct.

It is found in the secreted. Its function is as follows. Mu-conotoxins block voltage-gated sodium channels (Nav). This Conus geographus (Geography cone) protein is Mu-conotoxin GIIIB.